Consider the following 1190-residue polypeptide: DNA-directed RNA polymerase subunit beta (1190 aa).

It belongs to the RNA polymerase beta chain family. The RNAP catalytic core consists of 2 alpha, 1 beta, 1 beta' and 1 omega subunit. When a sigma factor is associated with the core the holoenzyme is formed, which can initiate transcription.

The catalysed reaction is RNA(n) + a ribonucleoside 5'-triphosphate = RNA(n+1) + diphosphate. Its function is as follows. DNA-dependent RNA polymerase catalyzes the transcription of DNA into RNA using the four ribonucleoside triphosphates as substrates. The chain is DNA-directed RNA polymerase subunit beta from Streptococcus suis (strain 98HAH33).